Reading from the N-terminus, the 335-residue chain is Transcription factor IIIA (335 aa).

9 consecutive C2H2-type zinc fingers follow at residues Tyr13–His37, Phe43–His67, Cys73–His98, Tyr105–His129, Phe135–His159, Tyr162–His188, Thr192–His214, Tyr221–His246, and Phe252–His276. Over residues Leu269–Lys280 the composition is skewed to basic and acidic residues. The tract at residues Leu269–Lys335 is disordered. Residues Lys281–Leu292 are compositionally biased toward basic residues.

The protein resides in the nucleus. Functionally, involved in ribosomal large subunit biogenesis. Interacts with the internal control region (ICR) of approximately 50 bases within the 5S RNA genes, is required for correct transcription of these genes by RNA polymerase III. Also binds the transcribed 5S RNA's. This chain is Transcription factor IIIA (gtf3a), found in Lithobates pipiens (Northern leopard frog).